Here is a 72-residue protein sequence, read N- to C-terminus: Small ribosomal subunit protein bS18 (72 aa).

The protein belongs to the bacterial ribosomal protein bS18 family. As to quaternary structure, part of the 30S ribosomal subunit. Forms a tight heterodimer with protein bS6.

Binds as a heterodimer with protein bS6 to the central domain of the 16S rRNA, where it helps stabilize the platform of the 30S subunit. This is Small ribosomal subunit protein bS18 from Francisella tularensis subsp. holarctica (strain FTNF002-00 / FTA).